We begin with the raw amino-acid sequence, 108 residues long: Heme oxygenase (staphylobilin-producing) (108 aa).

Positions Phe-2 to Leu-93 constitute an ABM domain. Asn-6 is a Fe cation binding site. Heme-binding positions include Arg-21–Ile-28 and His-76.

Belongs to the antibiotic biosynthesis monooxygenase family. Heme-degrading monooxygenase IsdG subfamily. In terms of assembly, homodimer.

The protein localises to the cytoplasm. The enzyme catalyses heme b + 5 AH2 + 4 O2 + 2 H(+) = delta-staphylobilin + Fe(2+) + formaldehyde + 5 A + 4 H2O. The catalysed reaction is heme b + 5 AH2 + 4 O2 + 2 H(+) = beta-staphylobilin + Fe(2+) + formaldehyde + 5 A + 4 H2O. Functionally, allows bacterial pathogens to use the host heme as an iron source. Catalyzes the oxidative degradation of the heme macrocyclic porphyrin ring to the oxo-bilirubin chromophore staphylobilin (a mixture of the linear tetrapyrroles 5-oxo-delta-bilirubin and 15-oxo-beta-bilirubin) in the presence of a suitable electron donor such as ascorbate or NADPH--cytochrome P450 reductase, with subsequent release of free iron. The polypeptide is Heme oxygenase (staphylobilin-producing) (isdI) (Staphylococcus aureus (strain Mu3 / ATCC 700698)).